An 816-amino-acid polypeptide reads, in one-letter code: Leucine--tRNA ligase (816 aa).

The 'HIGH' region signature appears at 42-52 (PYPSGSLHMGH). Positions 574–578 (KMSKS) match the 'KMSKS' region motif. An ATP-binding site is contributed by Lys-577.

The protein belongs to the class-I aminoacyl-tRNA synthetase family.

The protein localises to the cytoplasm. It catalyses the reaction tRNA(Leu) + L-leucine + ATP = L-leucyl-tRNA(Leu) + AMP + diphosphate. This Ruthia magnifica subsp. Calyptogena magnifica protein is Leucine--tRNA ligase.